Consider the following 127-residue polypeptide: Large ribosomal subunit protein bL20 (127 aa).

Belongs to the bacterial ribosomal protein bL20 family.

Its function is as follows. Binds directly to 23S ribosomal RNA and is necessary for the in vitro assembly process of the 50S ribosomal subunit. It is not involved in the protein synthesizing functions of that subunit. The protein is Large ribosomal subunit protein bL20 of Streptomyces avermitilis (strain ATCC 31267 / DSM 46492 / JCM 5070 / NBRC 14893 / NCIMB 12804 / NRRL 8165 / MA-4680).